Reading from the N-terminus, the 151-residue chain is Transcription factor ATOH7 (151 aa).

Residues 39–91 (KRRLAANARERRRMQGLNTAFDRLRKVVPQWGQDKKLSKYETLQMALSYIMAL) enclose the bHLH domain.

Its subcellular location is the nucleus. The protein localises to the perikaryon. It is found in the cell projection. It localises to the axon. Its function is as follows. Transcription factor that binds to DNA at the consensus sequence 5'-CAG[GC]TG-3'. Positively regulates the determination of retinal ganglion cell fate and formation of the optic nerve and retino-hypothalamic tract. Required for retinal circadian rhythm photoentrainment. Plays a role in brainstem auditory signaling and binaural processing. During retinal neurogenesis, activates its own transcription, as well as the transcription of CHRNB3 and BRN3. This chain is Transcription factor ATOH7, found in Gallus gallus (Chicken).